The chain runs to 497 residues: Histone-lysine N-methyltransferase ASHR3 (497 aa).

The PHD-type zinc finger occupies 118–186; it reads MVDCLVCHKP…QWRCVKCPMA (69 aa). One can recognise an AWS domain in the interval 283–326; the sequence is DGVGCTNCGPNCDRSCVCRVQCISCSKGCSCPESCGNRPFRKEK. An SET domain is found at 326 to 443; the sequence is KKIKIVKTEH…AGEPLTYDYR (118 aa). Residues 449 to 465 enclose the Post-SET domain; it reads PEVKCNCGSENCQGYLG.

It belongs to the class V-like SAM-binding methyltransferase superfamily. Histone-lysine methyltransferase family. SET2 subfamily. As to quaternary structure, interacts with AMS/bHLH21 by its SET domain and PHD finger. In terms of tissue distribution, expressed in roots, flowers and buds, the anther and in stamen filaments.

The protein resides in the nucleus. Its subcellular location is the chromosome. It carries out the reaction L-lysyl-[histone] + S-adenosyl-L-methionine = N(6)-methyl-L-lysyl-[histone] + S-adenosyl-L-homocysteine + H(+). Functionally, histone methyltransferase. Involved in stamen development. This chain is Histone-lysine N-methyltransferase ASHR3 (ASHR3), found in Arabidopsis thaliana (Mouse-ear cress).